Consider the following 355-residue polypeptide: MSALGSRETHVLTTIIESYITSAAPVGSRTVSRRSGLALSPASMRNTMSDLTDMGFLEQPHTSAGRIPTPKAFRLYVDALLRQSARRDEAPLHMVEALHGHEPEVGALLRRASNLVSEHARQVSMVLAPGPAEARLRSLDFVPAGEGLVLAVLVLEGGMVRTRLVRDDTHFGSDELVRFGNYINAHYRGHTLSGIRNSIHHELSGGGAQLEAMCAQALALGSLALDSIDDDRELYVNGTRNILDQAEFAELGRMRELMDALEERSRLLELLDRTILEDDVHVTFYPDDVSGGAQRRAPDGLRGCSMVSAPYGGASPLGVIGVIGPVRMDYRKVLPLVGAVSRVLTQLLRERFATG.

Belongs to the HrcA family.

In terms of biological role, negative regulator of class I heat shock genes (grpE-dnaK-dnaJ and groELS operons). Prevents heat-shock induction of these operons. This chain is Heat-inducible transcription repressor HrcA, found in Nitratidesulfovibrio vulgaris (strain ATCC 29579 / DSM 644 / CCUG 34227 / NCIMB 8303 / VKM B-1760 / Hildenborough) (Desulfovibrio vulgaris).